We begin with the raw amino-acid sequence, 433 residues long: Serine hydroxymethyltransferase (433 aa).

A (6S)-5,6,7,8-tetrahydrofolate-binding site is contributed by 121-123 (AHV). At K227 the chain carries N6-(pyridoxal phosphate)lysine. A (6S)-5,6,7,8-tetrahydrofolate-binding site is contributed by E243.

It belongs to the SHMT family. Homodimer. Pyridoxal 5'-phosphate serves as cofactor.

The protein resides in the cytoplasm. Its pathway is amino-acid biosynthesis; glycine biosynthesis; glycine from L-serine: step 1/1. In terms of biological role, catalyzes the reversible interconversion of serine and glycine with a modified folate serving as the one-carbon carrier. Also exhibits a pteridine-independent aldolase activity toward beta-hydroxyamino acids, producing glycine and aldehydes, via a retro-aldol mechanism. This chain is Serine hydroxymethyltransferase, found in Saccharolobus islandicus (strain M.14.25 / Kamchatka #1) (Sulfolobus islandicus).